The sequence spans 38 residues: Photosystem II reaction center protein M (38 aa).

The helical transmembrane segment at 7–27 threads the bilayer; the sequence is GFVASILFVLVPTVFLLILYI.

The protein belongs to the PsbM family. As to quaternary structure, PSII is composed of 1 copy each of membrane proteins PsbA, PsbB, PsbC, PsbD, PsbE, PsbF, PsbH, PsbI, PsbJ, PsbK, PsbL, PsbM, PsbT, PsbX, PsbY, PsbZ, Psb30/Ycf12, peripheral proteins PsbO, CyanoQ (PsbQ), PsbU, PsbV and a large number of cofactors. It forms dimeric complexes.

It is found in the cellular thylakoid membrane. Functionally, one of the components of the core complex of photosystem II (PSII). PSII is a light-driven water:plastoquinone oxidoreductase that uses light energy to abstract electrons from H(2)O, generating O(2) and a proton gradient subsequently used for ATP formation. It consists of a core antenna complex that captures photons, and an electron transfer chain that converts photonic excitation into a charge separation. This subunit is found at the monomer-monomer interface. The protein is Photosystem II reaction center protein M of Nostoc punctiforme (strain ATCC 29133 / PCC 73102).